The primary structure comprises 445 residues: Phosphoglucosamine mutase (445 aa).

Catalysis depends on Ser-102, which acts as the Phosphoserine intermediate. Ser-102, Asp-241, Asp-243, and Asp-245 together coordinate Mg(2+). Ser-102 carries the phosphoserine modification.

It belongs to the phosphohexose mutase family. Mg(2+) serves as cofactor. Post-translationally, activated by phosphorylation.

The catalysed reaction is alpha-D-glucosamine 1-phosphate = D-glucosamine 6-phosphate. Functionally, catalyzes the conversion of glucosamine-6-phosphate to glucosamine-1-phosphate. The protein is Phosphoglucosamine mutase of Escherichia coli O7:K1 (strain IAI39 / ExPEC).